A 131-amino-acid polypeptide reads, in one-letter code: Arsenate reductase (131 aa).

Active-site nucleophile residues include C10, C82, and C89. Intrachain disulfides connect C10-C82 and C82-C89.

It belongs to the low molecular weight phosphotyrosine protein phosphatase family. Thioredoxin-coupled ArsC subfamily.

Its subcellular location is the cytoplasm. It catalyses the reaction arsenate + [thioredoxin]-dithiol + H(+) = arsenite + [thioredoxin]-disulfide + H2O. Functionally, catalyzes the reduction of arsenate [As(V)] to arsenite [As(III)]. This chain is Arsenate reductase, found in Staphylococcus aureus (strain COL).